The primary structure comprises 131 residues: Con-Ins Q1 (131 aa).

Residues methionine 1–glycine 24 form the signal peptide. 4 cysteine pairs are disulfide-bonded: cysteine 29–cysteine 107, cysteine 41–cysteine 110, cysteine 53–cysteine 123, and cysteine 109–cysteine 114. A propeptide spans leucine 59 to arginine 92 (c peptide). Glutamate 118 is subject to 4-carboxyglutamate; partial. Serine 130 carries the serine amide modification.

It belongs to the insulin family. Heterodimer of A and B chains; disulfide-linked. In terms of tissue distribution, expressed by the venom gland.

The protein resides in the secreted. In terms of biological role, this venom insulin facilitates prey capture by rapidly inducing hypoglycemic shock. Intraperitoneal injection of this peptide into zebrafish lowers blood glucose with the same potency than human insulin. In vivo, when applied to water, this peptide reduces overall locomotor activity of zebrafish larvae, observed as a significant decrease in the percentage of time spent swimming and movement frequency. The polypeptide is Con-Ins Q1 (Conus quercinus (Oak cone)).